We begin with the raw amino-acid sequence, 454 residues long: UDP-N-acetylmuramate--L-alanine ligase (454 aa).

113 to 119 (GSHGKTT) serves as a coordination point for ATP.

It belongs to the MurCDEF family.

Its subcellular location is the cytoplasm. It catalyses the reaction UDP-N-acetyl-alpha-D-muramate + L-alanine + ATP = UDP-N-acetyl-alpha-D-muramoyl-L-alanine + ADP + phosphate + H(+). Its pathway is cell wall biogenesis; peptidoglycan biosynthesis. Cell wall formation. The protein is UDP-N-acetylmuramate--L-alanine ligase of Sulfurihydrogenibium sp. (strain YO3AOP1).